Consider the following 327-residue polypeptide: Lipoyl synthase (327 aa).

7 residues coordinate [4Fe-4S] cluster: cysteine 72, cysteine 77, cysteine 83, cysteine 98, cysteine 102, cysteine 105, and serine 313. Positions 83-302 (CWSHGTATIM…RRVGLEKGFL (220 aa)) constitute a Radical SAM core domain.

This sequence belongs to the radical SAM superfamily. Lipoyl synthase family. Requires [4Fe-4S] cluster as cofactor.

It localises to the cytoplasm. It carries out the reaction [[Fe-S] cluster scaffold protein carrying a second [4Fe-4S](2+) cluster] + N(6)-octanoyl-L-lysyl-[protein] + 2 oxidized [2Fe-2S]-[ferredoxin] + 2 S-adenosyl-L-methionine + 4 H(+) = [[Fe-S] cluster scaffold protein] + N(6)-[(R)-dihydrolipoyl]-L-lysyl-[protein] + 4 Fe(3+) + 2 hydrogen sulfide + 2 5'-deoxyadenosine + 2 L-methionine + 2 reduced [2Fe-2S]-[ferredoxin]. It functions in the pathway protein modification; protein lipoylation via endogenous pathway; protein N(6)-(lipoyl)lysine from octanoyl-[acyl-carrier-protein]: step 2/2. In terms of biological role, catalyzes the radical-mediated insertion of two sulfur atoms into the C-6 and C-8 positions of the octanoyl moiety bound to the lipoyl domains of lipoate-dependent enzymes, thereby converting the octanoylated domains into lipoylated derivatives. The chain is Lipoyl synthase from Francisella philomiragia subsp. philomiragia (strain ATCC 25017 / CCUG 19701 / FSC 153 / O#319-036).